Here is a 155-residue protein sequence, read N- to C-terminus: Ubiquinone biosynthesis protein COQ4 homolog, mitochondrial (155 aa).

Belongs to the COQ4 family. Component of a multi-subunit COQ enzyme complex. Zn(2+) is required as a cofactor.

Its subcellular location is the mitochondrion inner membrane. The catalysed reaction is a 4-hydroxy-3-methoxy-5-(all-trans-polyprenyl)benzoate + H(+) = a 2-methoxy-6-(all-trans-polyprenyl)phenol + CO2. The protein operates within cofactor biosynthesis; ubiquinone biosynthesis. Functionally, lyase that catalyzes the C1-decarboxylation of 4-hydroxy-3-methoxy-5-(all-trans-polyprenyl)benzoic acid into 2-methoxy-6-(all-trans-polyprenyl)phenol during ubiquinone biosynthesis. This chain is Ubiquinone biosynthesis protein COQ4 homolog, mitochondrial, found in Cryptosporidium hominis.